A 427-amino-acid chain; its full sequence is Peptidase B (427 aa).

Mn(2+) contacts are provided by Lys-195 and Asp-200. Residue Lys-207 is part of the active site. Residues Asp-218, Asp-277, and Glu-279 each contribute to the Mn(2+) site. Arg-281 is a catalytic residue.

This sequence belongs to the peptidase M17 family. As to quaternary structure, homohexamer. It depends on Mn(2+) as a cofactor.

Its subcellular location is the cytoplasm. The catalysed reaction is Release of an N-terminal amino acid, Xaa, from a peptide or arylamide. Xaa is preferably Glu or Asp but may be other amino acids, including Leu, Met, His, Cys and Gln.. In terms of biological role, probably plays an important role in intracellular peptide degradation. The sequence is that of Peptidase B from Escherichia coli (strain SE11).